We begin with the raw amino-acid sequence, 1052 residues long: Calmin (1052 aa).

Positions 1 to 288 are actin-binding; sequence MAAQEWDWFQ…IVTYVAQFLE (288 aa). The region spanning 32 to 139 is the Calponin-homology (CH) 1 domain; sequence NVQKRTFTRW…LIWNIILFFQ (108 aa). Positions 148 to 168 are enriched in low complexity; it reads SRSSPSSSLSPGSGGTDSDSS. A disordered region spans residues 148 to 178; that stretch reads SRSSPSSSLSPGSGGTDSDSSYPPTPTTERS. The region spanning 187-291 is the Calponin-homology (CH) 2 domain; the sequence is RKAIKTLLSW…YVAQFLERFP (105 aa). 4 disordered regions span residues 391–420, 455–545, 585–727, and 758–929; these read STGK…SNSL, KATK…TLLA, STSQ…SPPL, and GEDL…DSSI. 2 stretches are compositionally biased toward basic and acidic residues: residues 455–465 and 472–495; these read KATKELSKQDG and VSKE…DKVP. Positions 509 to 529 are enriched in polar residues; that stretch reads AQPSQDSSFCNGTVESPSSQG. Residue S537 is modified to Phosphoserine. 3 stretches are compositionally biased toward basic and acidic residues: residues 594-614, 622-651, and 659-669; these read PSSH…AEKP, PRAE…EDQG, and PADKKPKVYEK. The residue at position 679 (S679) is a Phosphoserine. At T710 the chain carries Phosphothreonine. The segment covering 711 to 720 has biased composition (basic and acidic residues); that stretch reads LRSHSEEGLD. S724 is modified (phosphoserine). Over residues 759–773 the composition is skewed to basic and acidic residues; sequence EDLKSEDTDLEHPED. Over residues 780 to 791 the composition is skewed to acidic residues; it reads REEEADEDEEEA. Low complexity predominate over residues 792–801; that stretch reads QSSQSSCSFS. The segment covering 836-849 has biased composition (basic and acidic residues); the sequence is SHEDHQPKETKENG. Residue S856 is modified to Phosphoserine. The segment covering 880-889 has biased composition (basic residues); the sequence is SKKKEKRKHM. S925 is subject to Phosphoserine. Residues 1027 to 1047 form a helical; Anchor for type IV membrane protein membrane-spanning segment; the sequence is VIYFILFLWLLVYCLLLFPQL.

In terms of tissue distribution, expressed in testis. Expressed during testis maturation process and in maturing spermatids. In brain, it is expressed in neurons of the hippocampus, cerebral cortex, and thalamus, Purkinje cells, and also in the choroid plexus and ependymal cells. Expressed predominantly in dendrites and cell bodies of the neurons, but not in axons. The level of expression increases during the period of maturation of the mouse brain after birth.

The protein resides in the membrane. It is found in the cytoplasm. The protein is Calmin (Clmn) of Mus musculus (Mouse).